The primary structure comprises 229 residues: Prolactin (229 aa).

An N-terminal signal peptide occupies residues 1–30 (MDNKGWSLKGSLLPLLLLVSDLLLCQGVTS). Residues C34 and C41 are joined by a disulfide bond. Phosphoserine occurs at positions 56, 64, and 120. Disulfide bonds link C88-C204 and C221-C229.

It belongs to the somatotropin/prolactin family. As to quaternary structure, interacts with PRLR.

It is found in the secreted. Functionally, prolactin acts primarily on the mammary gland by promoting lactation. This Neovison vison (American mink) protein is Prolactin (PRL).